The chain runs to 201 residues: Imidazole glycerol phosphate synthase subunit HisH 1 (201 aa).

One can recognise a Glutamine amidotransferase type-1 domain in the interval 1-201; the sequence is MIALIDYKAG…LKLLENFARL (201 aa). Cys-80 serves as the catalytic Nucleophile. Catalysis depends on residues His-183 and Glu-185.

Heterodimer of HisH and HisF.

The protein localises to the cytoplasm. The enzyme catalyses 5-[(5-phospho-1-deoxy-D-ribulos-1-ylimino)methylamino]-1-(5-phospho-beta-D-ribosyl)imidazole-4-carboxamide + L-glutamine = D-erythro-1-(imidazol-4-yl)glycerol 3-phosphate + 5-amino-1-(5-phospho-beta-D-ribosyl)imidazole-4-carboxamide + L-glutamate + H(+). The catalysed reaction is L-glutamine + H2O = L-glutamate + NH4(+). It participates in amino-acid biosynthesis; L-histidine biosynthesis; L-histidine from 5-phospho-alpha-D-ribose 1-diphosphate: step 5/9. In terms of biological role, IGPS catalyzes the conversion of PRFAR and glutamine to IGP, AICAR and glutamate. The HisH subunit provides the glutamine amidotransferase activity that produces the ammonia necessary to HisF for the synthesis of IGP and AICAR. This is Imidazole glycerol phosphate synthase subunit HisH 1 (hisH1) from Campylobacter jejuni subsp. jejuni serotype O:23/36 (strain 81-176).